We begin with the raw amino-acid sequence, 212 residues long: Probable GTP-binding protein EngB (212 aa).

The 173-residue stretch at 38 to 210 (SLPEIAFVGK…KASLAKCIKP (173 aa)) folds into the EngB-type G domain. Residues 46–53 (GKSNVGKS), 73–77 (GRTRQ), 91–94 (DLPG), 158–161 (TKSD), and 189–191 (VSN) each bind GTP. Mg(2+)-binding residues include S53 and T75.

Belongs to the TRAFAC class TrmE-Era-EngA-EngB-Septin-like GTPase superfamily. EngB GTPase family. It depends on Mg(2+) as a cofactor.

Its function is as follows. Necessary for normal cell division and for the maintenance of normal septation. This Rickettsia conorii (strain ATCC VR-613 / Malish 7) protein is Probable GTP-binding protein EngB.